We begin with the raw amino-acid sequence, 182 residues long: UPF0397 protein BCG9842_B2659 (182 aa).

The next 5 helical transmembrane spans lie at 9–29, 40–60, 71–91, 114–134, and 142–162; these read VVAIGIGAALYGILGLWGFSI, AILTVFGALFGPVAGLLIGLI, WGIWWGWVISSGIIGFSMGLI, ITGLVGIVIAIIFAGAFDIIV, and IVIQVLGATISDVIVFLVLGL.

This sequence belongs to the UPF0397 family.

It is found in the cell membrane. The sequence is that of UPF0397 protein BCG9842_B2659 from Bacillus cereus (strain G9842).